The chain runs to 485 residues: Cytolytic protein enterolobin (485 aa).

2 disulfide bridges follow: Cys34–Cys98 and Cys183–Cys189.

It belongs to the aerolysin family. As to quaternary structure, oligomerizes as a hexamer. The N-terminus is blocked.

Cytolytic protein with insecticidal activity. Acts as a pro-inflammatory agent. This chain is Cytolytic protein enterolobin, found in Enterolobium contortisiliquum (Pacara earpod tree).